The chain runs to 214 residues: GTP cyclohydrolase 1 (214 aa).

Residues cysteine 101, histidine 104, and cysteine 172 each contribute to the Zn(2+) site.

Belongs to the GTP cyclohydrolase I family. Toroid-shaped homodecamer, composed of two pentamers of five dimers.

The catalysed reaction is GTP + H2O = 7,8-dihydroneopterin 3'-triphosphate + formate + H(+). Its pathway is cofactor biosynthesis; 7,8-dihydroneopterin triphosphate biosynthesis; 7,8-dihydroneopterin triphosphate from GTP: step 1/1. This chain is GTP cyclohydrolase 1, found in Gloeobacter violaceus (strain ATCC 29082 / PCC 7421).